Here is a 363-residue protein sequence, read N- to C-terminus: Apelin receptor B (363 aa).

The Extracellular segment spans residues 1-38 (MESEGFSATTEQYEYYDYANETGLQPCDETDWDFSYSL). Asn20 carries an N-linked (GlcNAc...) asparagine glycan. 2 cysteine pairs are disulfide-bonded: Cys27/Cys287 and Cys109/Cys186. The chain crosses the membrane as a helical span at residues 39 to 59 (LPVFYMIVFVLGLSGNGVVIF). Residues 60-77 (TVWKAKPKRRSADTYIGN) lie on the Cytoplasmic side of the membrane. Residues 78–98 (LALADLAFVVTLPLWATYTAL) traverse the membrane as a helical segment. The Extracellular portion of the chain corresponds to 99–111 (GFHWPFGSALCKL). Residues 112–132 (SSYLVLLNMFASVFCLTCLSF) form a helical membrane-spanning segment. The Cytoplasmic segment spans residues 133–152 (DRYLAIVHSLSSAKLRSRSS). The chain crosses the membrane as a helical span at residues 153–173 (ILVSLAVIWLFSGLLALPSLI). Over 174–200 (LRDTRVEGNNTICDLDFSGVSSKENEN) the chain is Extracellular. An N-linked (GlcNAc...) asparagine glycan is attached at Asn182. The helical transmembrane segment at 201 to 221 (FWIGGLSILTTVPGFLLPLLL) threads the bilayer. The Cytoplasmic portion of the chain corresponds to 222–249 (MTIFYCFIGGKVTMHFQNLKKEEQKKKR). The chain crosses the membrane as a helical span at residues 250 to 270 (LLKIIITLVVVFAICWLPFHI). Residues 271-297 (LKTIHFLDLMGFLELSCSAQNIIVSLH) lie on the Extracellular side of the membrane. The helical transmembrane segment at 298 to 318 (PYATCLAYVNSCLNPFLYAFF) threads the bilayer. Over 319-363 (DLRFRSQCFFFFGFKKVLQGHLSNTSSSLSAQTQKSEIHSLATKV) the chain is Cytoplasmic.

This sequence belongs to the G-protein coupled receptor 1 family. Expressed in all blood vessels including the posterior cardinal vein, intersomitic veins and the vitelline vein network.

The protein localises to the cell membrane. In terms of biological role, g protein-coupled receptor for peptide hormones apelin (apln) and apelin receptor early endogenous ligand (apela), that plays a role in the regulation of normal cardiovascular function and fluid homeostasis. When acting as apelin receptor, activates both G(i) protein pathway that inhibits adenylate cyclase activity, and the beta-arrestin pathway that promotes internalization of the receptor. Also functions as mechanoreceptor that is activated by pathological stimuli in a G-protein-independent fashion to induce beta-arrestin signaling, hence eliciting cardiac hypertrophy. However, the presence of apelin ligand blunts cardiac hypertrophic induction from APLNR/APJ on response to pathological stimuli. Plays a key role in early development such as gastrulation, blood vessels formation and heart morphogenesis by acting as a receptor for apela hormone, promoting endoderm and mesendoderm cell migration and regulating the migration of cells fated to become myocardial progenitors, respectively. Promotes angioblast migration toward the embryonic midline, i.e. the position of the future vessel formation, during vasculogenesis. May promote sinus venosus (SV)-derived endothelial cells migration into the developing heart to promote coronary blood vessel development. Required for cardiovascular development, particularly for intersomitic vein angiogenesis by acting as a receptor for apln hormone. Also plays a role in various processes in adults such as regulation of blood vessel formation, blood pressure, heart contractility, and heart failure. Acts upstream of the i/o type of G-alpha proteins in the differentiation of endothelium, erythroid cells, myeloid cells and cardiomyocytes. This is Apelin receptor B (aplnr-b) from Xenopus laevis (African clawed frog).